Consider the following 250-residue polypeptide: Malonyl-[acyl-carrier protein] O-methyltransferase (250 aa).

This sequence belongs to the methyltransferase superfamily.

The catalysed reaction is malonyl-[ACP] + S-adenosyl-L-methionine = malonyl-[ACP] methyl ester + S-adenosyl-L-homocysteine. It participates in cofactor biosynthesis; biotin biosynthesis. Functionally, converts the free carboxyl group of a malonyl-thioester to its methyl ester by transfer of a methyl group from S-adenosyl-L-methionine (SAM). It allows to synthesize pimeloyl-ACP via the fatty acid synthetic pathway. In Neorickettsia risticii (strain Illinois), this protein is Malonyl-[acyl-carrier protein] O-methyltransferase.